Here is a 174-residue protein sequence, read N- to C-terminus: MALLEIIHYPSKILRTISKEVVSFDSKLHQQLDDMHETMIASEGIGLAAIQVGLPLRMLIINLPQEDGVQHKEDCLEIINPKWIETKGSIMYREGCLSVPGFYEEVERFEKVKIEYQNRFAEVKILEASELLAVAIQHEIDHLNGVLFVDKLSILKRKKFEKELKELQKKQKHK.

Residues cysteine 96 and histidine 138 each coordinate Fe cation. Residue glutamate 139 is part of the active site. Histidine 142 contacts Fe cation.

The protein belongs to the polypeptide deformylase family. Fe(2+) serves as cofactor.

The catalysed reaction is N-terminal N-formyl-L-methionyl-[peptide] + H2O = N-terminal L-methionyl-[peptide] + formate. Functionally, removes the formyl group from the N-terminal Met of newly synthesized proteins. Requires at least a dipeptide for an efficient rate of reaction. N-terminal L-methionine is a prerequisite for activity but the enzyme has broad specificity at other positions. In Helicobacter pylori (strain J99 / ATCC 700824) (Campylobacter pylori J99), this protein is Peptide deformylase.